Consider the following 60-residue polypeptide: Large ribosomal subunit protein bL32 (60 aa).

Belongs to the bacterial ribosomal protein bL32 family.

This Streptococcus equi subsp. zooepidemicus (strain MGCS10565) protein is Large ribosomal subunit protein bL32.